A 98-amino-acid chain; its full sequence is Cuticle protein 67, isoform A (98 aa).

6 repeat units span residues 7 to 10, 15 to 18, 22 to 25, 79 to 82, 86 to 89, and 92 to 95.

Its function is as follows. Component of the cuticle of migratory locust which contains more than 100 different structural proteins. This chain is Cuticle protein 67, isoform A, found in Locusta migratoria (Migratory locust).